The sequence spans 300 residues: MDQQSTRTDITVNVDGFWMLQALLDIRHVAPELRCRPYVSTDSNDWLNEHPGMAVMREQGIVVNDAVNEQVAARMKVLAAPDLEVVALLSRGKLLYGVIDDENQPPGSRDIPDNEFRVVLARRGQHWVSAVRVGNDITVDDVTVSDSASIAALVMDGLESIHHADPAAINAVNVPMEEMLEATKSWQESGFNVFSGGDLRRMGISAATVAALGQALSDPAAEVAVYARQYRDDAKGPSASVLSLKDGSGGRIALYQQARTAGSGEAWLAICPATPQLVQVGVKTVLDTLPYGEWKTHSRV.

It belongs to the EspG family. Interacts specifically with ESX-5-dependent PE/PPE proteins. Forms a 1:1:1 heterotrimeric complex with the PE25/PPE41 dimer, via PPE41. Binding of EspG5 does not cause conformational changes in the PE25/PPE41 dimer. Forms a 1:1:1 heterotrimeric complex with the PE8/PPE15 dimer, via PPE15.

It is found in the cytoplasm. In terms of biological role, specific chaperone for cognate PE/PPE proteins. Plays an important role in preventing aggregation of PE/PPE dimers. This is ESX-5 secretion-associated protein EspG5 from Mycobacterium tuberculosis (strain ATCC 25618 / H37Rv).